Here is a 172-residue protein sequence, read N- to C-terminus: C-phycocyanin beta chain (172 aa).

Residues Asn-35, Asp-39, Asn-72, Arg-77, Cys-82, 82-88, 149-151, and Cys-153 contribute to the (2R,3E)-phycocyanobilin site; these read CLRDMEI and TTG. An N4-methylasparagine modification is found at Asn-72.

It belongs to the phycobiliprotein family. In terms of assembly, heterodimer of an alpha and a beta subunit. Dimers further assemble into trimers and the trimers into hexamers. The basic functional unit of phycobiliproteins is a ring-shaped hexamer formed from two back-to-back trimers contacting via the alpha chain subunits. The trimers are composed of alpha/beta subunit heterodimers arranged around a three-fold axis of symmetry. The phycoerythrins also contain a gamma subunit which is located in the center of the hexamer. Contains two covalently linked phycocyanobilin chromophores.

It is found in the plastid. The protein resides in the chloroplast thylakoid membrane. Light-harvesting photosynthetic tetrapyrrole chromophore-protein from the phycobiliprotein complex (phycobilisome, PBS). Phycocyanin is the major phycobiliprotein in the PBS rod. In Galdieria sulphuraria (Red alga), this protein is C-phycocyanin beta chain (cpcB).